The primary structure comprises 432 residues: Transcriptional adapter 3 (432 aa).

Residues 40–69 (IEELDTLQLELETLLSSASRRLRVLEAETQ) are a coiled coil. Disordered stretches follow at residues 88-127 (KEHE…RNMQ) and 275-313 (SPVE…HTKS). Residues 293 to 305 (DGASTSPRSQNKP) are compositionally biased toward polar residues. The stretch at 367–407 (LLRLAKEEMNRQELRQRVRMADNEVMDAFRKIMAARQKKRT) forms a coiled coil.

Belongs to the NGG1 family.

The protein localises to the nucleus. In terms of biological role, functions as a component of the PCAF complex. The PCAF complex is capable of efficiently acetylating histones in a nucleosomal context. This is Transcriptional adapter 3 (tada3) from Xenopus tropicalis (Western clawed frog).